A 573-amino-acid polypeptide reads, in one-letter code: Acyl-coenzyme A synthetase ACSM1, mitochondrial (573 aa).

The N-terminal 35 residues, 1 to 35 (MQWLKSFQICKVLQGFSLSPTQLHRRLFSRVGAPR), are a transit peptide targeting the mitochondrion. Residue Lys-81 is modified to N6-succinyllysine. N6-acetyllysine; alternate is present on Lys-142. Residue Lys-142 is modified to N6-succinyllysine; alternate. Lys-179 bears the N6-succinyllysine mark. Position 200 is an N6-acetyllysine; alternate (Lys-200). Lys-200 carries the post-translational modification N6-succinyllysine; alternate. Lys-210 carries the post-translational modification N6-acetyllysine. 222–230 (TSGTTGYPK) is an ATP binding site. An N6-succinyllysine mark is found at Lys-233 and Lys-324. N6-acetyllysine; alternate is present on residues Lys-352 and Lys-387. Residues Lys-352 and Lys-387 each carry the N6-succinyllysine; alternate modification. ATP contacts are provided by Asp-448 and Arg-463. Lys-501 is modified (N6-succinyllysine). An N6-acetyllysine modification is found at Lys-527. Lys-534 bears the N6-acetyllysine; alternate mark. An N6-succinyllysine; alternate modification is found at Lys-534. Position 545 is an N6-acetyllysine (Lys-545). Lys-559 provides a ligand contact to ATP.

The protein belongs to the ATP-dependent AMP-binding enzyme family. Monomer. Mg(2+) is required as a cofactor. Requires Mn(2+) as cofactor. As to expression, highly expressed in liver and kidney.

It localises to the mitochondrion matrix. The protein localises to the mitochondrion. It catalyses the reaction a medium-chain fatty acid + ATP + CoA = a medium-chain fatty acyl-CoA + AMP + diphosphate. The catalysed reaction is benzoate + ATP + CoA = benzoyl-CoA + AMP + diphosphate. It carries out the reaction (R)-lipoate + GTP + H(+) = (R)-lipoyl-GMP + diphosphate. The enzyme catalyses octanoate + ATP + CoA = octanoyl-CoA + AMP + diphosphate. It catalyses the reaction decanoate + ATP + CoA = decanoyl-CoA + AMP + diphosphate. The catalysed reaction is dodecanoate + ATP + CoA = dodecanoyl-CoA + AMP + diphosphate. It carries out the reaction tetradecanoate + ATP + CoA = tetradecanoyl-CoA + AMP + diphosphate. The enzyme catalyses hexanoate + ATP + CoA = hexanoyl-CoA + AMP + diphosphate. It catalyses the reaction butanoate + ATP + CoA = butanoyl-CoA + AMP + diphosphate. The catalysed reaction is hexadecanoate + ATP + CoA = hexadecanoyl-CoA + AMP + diphosphate. In terms of biological role, catalyzes the activation of fatty acids by CoA to produce an acyl-CoA, the first step in fatty acid metabolism. Capable of activating medium-chain fatty acids (e.g. butyric (C4) to decanoic (C10) acids), and certain carboxylate-containing xenobiotics, e.g. benzoate. Also catalyzes the activation of lipoate to lipoyl-nucleoside monophosphate. Activates lipoate with GTP at a 1000-fold higher rate than with ATP and activates both (R)- and (S)-lipoate to the respective lipoyl-GMP, with a preference for (R)-lipoate. The sequence is that of Acyl-coenzyme A synthetase ACSM1, mitochondrial (Acsm1) from Mus musculus (Mouse).